A 1033-amino-acid chain; its full sequence is Potassium-transporting ATPase alpha chain 2 (1033 aa).

At 1-96 the chain is on the cytoplasmic side; it reads MRRKTLEIYS…NALSPPKQTP (96 aa). The helical transmembrane segment at 97–117 threads the bilayer; sequence EIIKFLKQMIGGFSILLWVGA. Topologically, residues 118–140 are lumenal; it reads ILCWIAYGIQYASNQSGSLDNVY. Residues 141–161 traverse the membrane as a helical segment; it reads LGVVLALVVILTGIFAYYQEA. The Cytoplasmic segment spans residues 162–297; sequence KSTNIMSSFS…NEKTPIATEI (136 aa). A helical transmembrane segment spans residues 298–317; sequence EHFVHIVAGVAVSIGILFFI. At 318–329 the chain is on the lumenal side; it reads IAVSLKYRVLDS. The chain crosses the membrane as a helical span at residues 330-347; the sequence is IIFLIGIIVANVPEGLLA. Residues 348–781 lie on the Cytoplasmic side of the membrane; the sequence is TVTVTLSLTA…EEGRLIFDNL (434 aa). Catalysis depends on Asp385, which acts as the 4-aspartylphosphate intermediate. Residues Asp726 and Asp730 each contribute to the Mg(2+) site. A helical membrane pass occupies residues 782-801; the sequence is KKTIAYTLTKNIAELCPFLV. The Lumenal segment spans residues 802 to 811; the sequence is YIIVGLPLPI. Residues 812–832 traverse the membrane as a helical segment; the sequence is GTITILFIDLGTDIIPSIALA. The Cytoplasmic portion of the chain corresponds to 833–852; sequence YEKVESDIMNRKPRHKKKDR. Residues 853–875 form a helical membrane-spanning segment; that stretch reads LVNHQLAIYSYLHIGLMQALGAF. At 876–927 the chain is on the lumenal side; the sequence is LVYFTVYAQQGFWPTSLIQLRVKWEQDYVNDLEDSYGQQWTRYQRKYLEWTG. A helical transmembrane segment spans residues 928 to 947; the sequence is YTAFFVGIMVQQIADLIIRK. Residues 948 to 961 lie on the Cytoplasmic side of the membrane; it reads TRRNSIFQQGLFRN. The residue at position 952 (Ser952) is a Phosphoserine; by PKA. Residues 962–980 traverse the membrane as a helical segment; that stretch reads KVIWVGITSQIIVALILSC. Residues 981–995 are Lumenal-facing; sequence GLGSITALNFTMLRV. Residues 996-1016 traverse the membrane as a helical segment; sequence QYWFVAVPHAILIWVYDEVRK. Residues 1017–1033 lie on the Cytoplasmic side of the membrane; that stretch reads LFLRLYPGSWWDKNMYY.

Belongs to the cation transport ATPase (P-type) (TC 3.A.3) family. Type IIC subfamily. Composed of two subunits: alpha (catalytic) and beta. As to expression, found in skin, kidney and distal colon.

The protein resides in the membrane. The catalysed reaction is K(+)(out) + ATP + H2O + H(+)(in) = K(+)(in) + ADP + phosphate + 2 H(+)(out). In terms of biological role, catalyzes the hydrolysis of ATP coupled with the exchange of H(+) and K(+) ions across the plasma membrane. Responsible for potassium absorption in various tissues. The sequence is that of Potassium-transporting ATPase alpha chain 2 (ATP12A) from Cavia porcellus (Guinea pig).